The chain runs to 185 residues: Elongation factor P (185 aa).

The protein belongs to the elongation factor P family.

It is found in the cytoplasm. Its pathway is protein biosynthesis; polypeptide chain elongation. In terms of biological role, involved in peptide bond synthesis. Stimulates efficient translation and peptide-bond synthesis on native or reconstituted 70S ribosomes in vitro. Probably functions indirectly by altering the affinity of the ribosome for aminoacyl-tRNA, thus increasing their reactivity as acceptors for peptidyl transferase. The sequence is that of Elongation factor P from Bacillus velezensis (strain DSM 23117 / BGSC 10A6 / LMG 26770 / FZB42) (Bacillus amyloliquefaciens subsp. plantarum).